We begin with the raw amino-acid sequence, 1465 residues long: DNA polymerase III PolC-type (1465 aa).

Residues 427–583 (YVVFDVETTG…YDAEATGRLL (157 aa)) form the Exonuclease domain.

The protein belongs to the DNA polymerase type-C family. PolC subfamily.

It is found in the cytoplasm. The catalysed reaction is DNA(n) + a 2'-deoxyribonucleoside 5'-triphosphate = DNA(n+1) + diphosphate. Its function is as follows. Required for replicative DNA synthesis. This DNA polymerase also exhibits 3' to 5' exonuclease activity. This Streptococcus pyogenes serotype M12 (strain MGAS2096) protein is DNA polymerase III PolC-type.